Here is a 784-residue protein sequence, read N- to C-terminus: Protein-tyrosine-phosphatase MKP1 (784 aa).

2 disordered regions span residues 1–73 (MVGR…NSKA) and 94–118 (PKAG…TGER). Residues 22 to 34 (WRSASWSASRTAS) are compositionally biased toward low complexity. Phosphothreonine is present on residues Thr-64 and Thr-109. In terms of domain architecture, Tyrosine-protein phosphatase spans 149-291 (ECSKVADHIY…LLQCQKRVHA (143 aa)). Cys-235 serves as the catalytic Phosphocysteine intermediate. Position 235 to 241 (235 to 241 (CCQGVSR)) interacts with substrate. Residues 488 to 586 (HSSGSPSSTT…ASPSLAERRG (99 aa)) are disordered. Composition is skewed to low complexity over residues 489–510 (SSGS…FLSP) and 521–553 (SLKS…LSLL). Positions 554–577 (PSQTSPKESRGVNTFLQPSPNRKA) are enriched in polar residues. Ser-558 and Ser-572 each carry phosphoserine.

Interacts with MPK6. May interact with MPK3 and MPK4. In terms of processing, phosphorylated on threonine and serine residues by MPK6.

The protein localises to the cytoplasm. It localises to the cytosol. It carries out the reaction O-phospho-L-tyrosyl-[protein] + H2O = L-tyrosyl-[protein] + phosphate. In terms of biological role, protein-tyrosine-phosphatase that acts as a negative regulator of MPK6 and MPK3 signaling by dephosphorylating and repressing MPK6 and MPK3. Modulates defense response by repressing salicylic acid (SA) production, camalexin biosynthesis and SNC1-mediated responses. Acts as a negative regulator of MPK6-mediated pathogen-associated molecular pattern (PAMP) responses, including MPK6 and MPK3 activation, accumulation of extracellular reactive oxygen species and inhibition of seedling growth. Involved in UV-B stress tolerance. May be involved in salt and genotoxic stress responses. The polypeptide is Protein-tyrosine-phosphatase MKP1 (MKP1) (Arabidopsis thaliana (Mouse-ear cress)).